A 492-amino-acid polypeptide reads, in one-letter code: MKNQLFIYNTLTGRKELFQSLYPKRVGLYVCGPTVYGDPHLGHARPAITFDILFRYLMHLNYKVRYVRNITDVGHLTSDSDLGEDKIARKARLEDLEPMEVVQHYLNLYHKTMDALNVLPPSIEPHASAHIIEQIQLIKEILEKGYAYESKGSVYFDVEKYNKKYNYGKLSGQNIADMLNTTRKLDGQEGKRNPIDFALWKKASSKHIMQWISPWSNGFPGWHLECTTMSRKYLGNLFDIHGGGMDLIFPHHECEIAQKVASTGYEGVKYWMHNNMVTVNGQKMGKSSNNFINLEQLFNGTNPLLIQSYNPMTVRFFILQSHYRNTIDFSNKALQASKKGLSRLLEANNNIKQLTAQTTNSTVNIEGLRNKSIEAMNDDLNTPIIISYLFEATRIVNSALAKQTQLTTEDIQQLKDFFQLFLFNLLGIKDELKYKNTSYNSFAKAVDLLLQIRVQAKQEKNWIFADKIRDELTVLGFEVKDTKNGFEWKLSK.

Position 31 (Cys31) interacts with Zn(2+). Positions 33 to 43 (PTVYGDPHLGH) match the 'HIGH' region motif. Zn(2+)-binding residues include Cys226, His251, and Glu255. A 'KMSKS' region motif is present at residues 283 to 287 (KMGKS). Lys286 is a binding site for ATP.

It belongs to the class-I aminoacyl-tRNA synthetase family. As to quaternary structure, monomer. The cofactor is Zn(2+).

The protein resides in the cytoplasm. It catalyses the reaction tRNA(Cys) + L-cysteine + ATP = L-cysteinyl-tRNA(Cys) + AMP + diphosphate. In Azobacteroides pseudotrichonymphae genomovar. CFP2, this protein is Cysteine--tRNA ligase.